The sequence spans 417 residues: Probable secreted aspartic protease ARB_07536 (417 aa).

The first 20 residues, 1–20 (MRGILILVALGAATIPQASA), serve as a signal peptide directing secretion. The 372-residue stretch at 42-413 (NTDLVTIGTP…DFEKNRVGLA (372 aa)) folds into the Peptidase A1 domain. Asn-74, Asn-91, Asn-100, Asn-170, Asn-276, and Asn-314 each carry an N-linked (GlcNAc...) asparagine glycan. Cysteines 333 and 373 form a disulfide.

Belongs to the peptidase A1 family.

The protein resides in the secreted. In terms of biological role, probable secreted aspartic protease that supplies the fungus with nutrient amino acids. May be able to degrade the selected host's proteins involved in the immune defense. The sequence is that of Probable secreted aspartic protease ARB_07536 from Arthroderma benhamiae (strain ATCC MYA-4681 / CBS 112371) (Trichophyton mentagrophytes).